We begin with the raw amino-acid sequence, 72 residues long: Large ribosomal subunit protein uL29 (72 aa).

The protein belongs to the universal ribosomal protein uL29 family.

The sequence is that of Large ribosomal subunit protein uL29 (rpmC) from Chlamydia muridarum (strain MoPn / Nigg).